A 557-amino-acid chain; its full sequence is MLRSDAVTKGIQRSPNRAMLRAVGFGDSDFGKPILGIANGYSTITPCNIGLNDLAKRAEEAARQAGGMPQMFGTITVSDGISMGTEGMKYSLVSREVIADAIETACNGQSMDGVLAVGGCDKNMPGAMLAMARMNIPSVFVYGGTIKPGKLGGCDLTVVSAFEAVGQLTSGKIDEVQLTAVEKNACPGAGSCGGMFTANTMSAAIETMGLSLPYSSTMAAEDEEKADSAARSAEVLVEAVKANIRPLDLLTKEAFENAISVIMAVGGSTNAVLHLLAIARTAGVDLSIDDFERIRQRVPVICDLKPSGRYVTVDLHNAGGIPQVMKLLLDAGLLHSDCRTVEGKSLKELLADVPSEPPAGQEVIRPLSNPLYAKGHLAILKGNLASEGSVAKISGVKTPVLTGPARVFESEEDCLAAILDKKIQAGDVVVVRNEGPVGGPGMREMLAPTSAIVGQGLGDKVALITDGRFSGGTYGLVVGHVAPEAAVGGTIGLVQEGDSITVDADQLLLQLNVDQAELDRRRAGWSKPEPRYRSGILGKYARLVSSSSRGATTDHAD.

C47 contributes to the [2Fe-2S] cluster binding site. D79 is a binding site for Mg(2+). A [2Fe-2S] cluster-binding site is contributed by C120. Mg(2+) contacts are provided by D121 and K122. K122 carries the N6-carboxylysine modification. C192 provides a ligand contact to [2Fe-2S] cluster. E444 contacts Mg(2+). Residue S470 is the Proton acceptor of the active site.

Belongs to the IlvD/Edd family. In terms of assembly, homodimer. [2Fe-2S] cluster is required as a cofactor. It depends on Mg(2+) as a cofactor.

The catalysed reaction is (2R)-2,3-dihydroxy-3-methylbutanoate = 3-methyl-2-oxobutanoate + H2O. It catalyses the reaction (2R,3R)-2,3-dihydroxy-3-methylpentanoate = (S)-3-methyl-2-oxopentanoate + H2O. Its pathway is amino-acid biosynthesis; L-isoleucine biosynthesis; L-isoleucine from 2-oxobutanoate: step 3/4. It participates in amino-acid biosynthesis; L-valine biosynthesis; L-valine from pyruvate: step 3/4. Functions in the biosynthesis of branched-chain amino acids. Catalyzes the dehydration of (2R,3R)-2,3-dihydroxy-3-methylpentanoate (2,3-dihydroxy-3-methylvalerate) into 2-oxo-3-methylpentanoate (2-oxo-3-methylvalerate) and of (2R)-2,3-dihydroxy-3-methylbutanoate (2,3-dihydroxyisovalerate) into 2-oxo-3-methylbutanoate (2-oxoisovalerate), the penultimate precursor to L-isoleucine and L-valine, respectively. This Synechococcus sp. (strain CC9605) protein is Dihydroxy-acid dehydratase.